An 882-amino-acid chain; its full sequence is Alanine--tRNA ligase (882 aa).

Zn(2+)-binding residues include H571, H575, C673, and H677.

The protein belongs to the class-II aminoacyl-tRNA synthetase family. It depends on Zn(2+) as a cofactor.

Its subcellular location is the cytoplasm. It carries out the reaction tRNA(Ala) + L-alanine + ATP = L-alanyl-tRNA(Ala) + AMP + diphosphate. Its function is as follows. Catalyzes the attachment of alanine to tRNA(Ala) in a two-step reaction: alanine is first activated by ATP to form Ala-AMP and then transferred to the acceptor end of tRNA(Ala). Also edits incorrectly charged Ser-tRNA(Ala) and Gly-tRNA(Ala) via its editing domain. The sequence is that of Alanine--tRNA ligase from Stenotrophomonas maltophilia (strain K279a).